The following is a 137-amino-acid chain: ATP synthase epsilon chain (137 aa).

This sequence belongs to the ATPase epsilon chain family. As to quaternary structure, F-type ATPases have 2 components, CF(1) - the catalytic core - and CF(0) - the membrane proton channel. CF(1) has five subunits: alpha(3), beta(3), gamma(1), delta(1), epsilon(1). CF(0) has three main subunits: a, b and c.

It localises to the cellular thylakoid membrane. Functionally, produces ATP from ADP in the presence of a proton gradient across the membrane. In Trichodesmium erythraeum (strain IMS101), this protein is ATP synthase epsilon chain.